A 424-amino-acid polypeptide reads, in one-letter code: Serine hydroxymethyltransferase (424 aa).

Residues Leu-113 and Gly-117–Leu-119 contribute to the (6S)-5,6,7,8-tetrahydrofolate site. The residue at position 222 (Lys-222) is an N6-(pyridoxal phosphate)lysine. Residue Ser-361–Phe-363 participates in (6S)-5,6,7,8-tetrahydrofolate binding.

Belongs to the SHMT family. Homodimer. It depends on pyridoxal 5'-phosphate as a cofactor.

The protein localises to the cytoplasm. It catalyses the reaction (6R)-5,10-methylene-5,6,7,8-tetrahydrofolate + glycine + H2O = (6S)-5,6,7,8-tetrahydrofolate + L-serine. The protein operates within one-carbon metabolism; tetrahydrofolate interconversion. It participates in amino-acid biosynthesis; glycine biosynthesis; glycine from L-serine: step 1/1. Catalyzes the reversible interconversion of serine and glycine with tetrahydrofolate (THF) serving as the one-carbon carrier. This reaction serves as the major source of one-carbon groups required for the biosynthesis of purines, thymidylate, methionine, and other important biomolecules. Also exhibits THF-independent aldolase activity toward beta-hydroxyamino acids, producing glycine and aldehydes, via a retro-aldol mechanism. This is Serine hydroxymethyltransferase from Flavobacterium johnsoniae (strain ATCC 17061 / DSM 2064 / JCM 8514 / BCRC 14874 / CCUG 350202 / NBRC 14942 / NCIMB 11054 / UW101) (Cytophaga johnsonae).